The primary structure comprises 225 residues: Cytidylate kinase (225 aa).

11–19 (GPAAAGKST) provides a ligand contact to ATP.

This sequence belongs to the cytidylate kinase family. Type 1 subfamily.

Its subcellular location is the cytoplasm. The enzyme catalyses CMP + ATP = CDP + ADP. It catalyses the reaction dCMP + ATP = dCDP + ADP. The protein is Cytidylate kinase of Bacillus anthracis (strain A0248).